Here is a 151-residue protein sequence, read N- to C-terminus: Superoxide dismutase [Cu-Zn] A (151 aa).

Residue cysteine 6 is the site of S-palmitoyl cysteine attachment. Positions 45, 47, and 62 each coordinate Cu cation. A disulfide bridge links cysteine 56 with cysteine 144. Zn(2+) contacts are provided by histidine 62, histidine 70, histidine 79, and aspartate 82. Residue histidine 118 coordinates Cu cation.

It belongs to the Cu-Zn superoxide dismutase family. In terms of assembly, homodimer, and heterodimer of Superoxide dismutase [Cu-Zn] A and B. Cu cation is required as a cofactor. It depends on Zn(2+) as a cofactor.

It localises to the cytoplasm. Its subcellular location is the nucleus. It catalyses the reaction 2 superoxide + 2 H(+) = H2O2 + O2. Its function is as follows. Destroys radicals which are normally produced within the cells and which are toxic to biological systems. The sequence is that of Superoxide dismutase [Cu-Zn] A (sod1-a) from Xenopus laevis (African clawed frog).